We begin with the raw amino-acid sequence, 467 residues long: Hydroxyacid-oxoacid transhydrogenase, mitochondrial (467 aa).

N6-acetyllysine is present on Lys-445. At Ser-452 the chain carries Phosphoserine.

This sequence belongs to the iron-containing alcohol dehydrogenase family. Hydroxyacid-oxoacid transhydrogenase subfamily. In terms of tissue distribution, only expressed in adult liver.

The protein resides in the mitochondrion. It carries out the reaction (S)-3-hydroxybutanoate + 2-oxoglutarate = (R)-2-hydroxyglutarate + acetoacetate. The catalysed reaction is 4-hydroxybutanoate + 2-oxoglutarate = (R)-2-hydroxyglutarate + succinate semialdehyde. In terms of biological role, catalyzes the cofactor-independent reversible oxidation of gamma-hydroxybutyrate (GHB) to succinic semialdehyde (SSA) coupled to reduction of 2-ketoglutarate (2-KG) to D-2-hydroxyglutarate (D-2-HG). D,L-3-hydroxyisobutyrate and L-3-hydroxybutyrate (L-3-OHB) are also substrates for HOT with 10-fold lower activities. The chain is Hydroxyacid-oxoacid transhydrogenase, mitochondrial (ADHFE1) from Homo sapiens (Human).